The sequence spans 214 residues: Ribonuclease P protein component 3 (214 aa).

It belongs to the eukaryotic/archaeal RNase P protein component 3 family. Consists of a catalytic RNA component and at least 4-5 protein subunits.

The protein resides in the cytoplasm. The catalysed reaction is Endonucleolytic cleavage of RNA, removing 5'-extranucleotides from tRNA precursor.. Its function is as follows. Part of ribonuclease P, a protein complex that generates mature tRNA molecules by cleaving their 5'-ends. This Thermococcus gammatolerans (strain DSM 15229 / JCM 11827 / EJ3) protein is Ribonuclease P protein component 3.